A 68-amino-acid chain; its full sequence is Conotoxin Em11.5 (68 aa).

Positions 1–26 are cleaved as a signal peptide; the sequence is MMFRLTSVGCFLLVIACLNLFQVVLT. Disulfide bonds link C29–C43, C36–C48, C42–C52, and C47–C56. Residue F60 is modified to Phenylalanine amide. A propeptide spanning residues 64–68 is cleaved from the precursor; it reads ATFQE.

The protein belongs to the conotoxin I2 superfamily. As to expression, expressed by the venom duct.

It is found in the secreted. The chain is Conotoxin Em11.5 from Conus emaciatus (False virgin cone).